Here is a 206-residue protein sequence, read N- to C-terminus: Imidazoleglycerol-phosphate dehydratase (206 aa).

It belongs to the imidazoleglycerol-phosphate dehydratase family.

The protein localises to the cytoplasm. It catalyses the reaction D-erythro-1-(imidazol-4-yl)glycerol 3-phosphate = 3-(imidazol-4-yl)-2-oxopropyl phosphate + H2O. It participates in amino-acid biosynthesis; L-histidine biosynthesis; L-histidine from 5-phospho-alpha-D-ribose 1-diphosphate: step 6/9. The sequence is that of Imidazoleglycerol-phosphate dehydratase from Mycolicibacterium smegmatis (strain ATCC 700084 / mc(2)155) (Mycobacterium smegmatis).